We begin with the raw amino-acid sequence, 254 residues long: Alcohol dehydrogenase 1 (254 aa).

10-33 (FVAGLGGIGLDTSREIVKSGPKNL) contacts NAD(+). A substrate-binding site is contributed by S138. The active-site Proton acceptor is the Y151.

It belongs to the short-chain dehydrogenases/reductases (SDR) family. Homodimer.

It carries out the reaction a primary alcohol + NAD(+) = an aldehyde + NADH + H(+). The enzyme catalyses a secondary alcohol + NAD(+) = a ketone + NADH + H(+). In Drosophila hydei (Fruit fly), this protein is Alcohol dehydrogenase 1 (Adh1).